The following is a 398-amino-acid chain: MNIPSIENCDLHNKTVLLRVDFNVPIKDGEIRDVTRILRALPTIQYLVNASAKIIIISHFGRPKARDNNLSLKNVIDTLSQLLNKKVKFIDDCFGEKVQRAVSVMDAGDIILLENLRFYKEEEQSDSNFAKQLASLADIYVNDAFSCSHRAHASISRITEFLPSYAGFCLQDELKYLEKAVSFKAKPITAIVGGAKISTKIKVLMKLTEKVNYLVLGGAIANNFLSFSKVNIGKSFFQNGVDDLLHNILETANKNNCKIVVPEDVLVAVNSDYSTSISRRTESILDGDIILDIGPQTLSTISSIIASSKTLLWNGPIGVFEHSAFASGTIGVMKIVSDLTHKGKLTSIIGGGDSLSAISAAGLADKDFTYVSTGGGAFLDWLSGDEMPGVAALQKRLD.

Substrate is bound by residues 21–23 (DFN), Arg-36, 59–62 (HFGR), Arg-117, and Arg-150. Residues Lys-200, Glu-321, and 351-354 (GGDS) contribute to the ATP site.

It belongs to the phosphoglycerate kinase family. As to quaternary structure, monomer.

The protein localises to the cytoplasm. It catalyses the reaction (2R)-3-phosphoglycerate + ATP = (2R)-3-phospho-glyceroyl phosphate + ADP. Its pathway is carbohydrate degradation; glycolysis; pyruvate from D-glyceraldehyde 3-phosphate: step 2/5. In Wolbachia pipientis wMel, this protein is Phosphoglycerate kinase.